We begin with the raw amino-acid sequence, 264 residues long: Indole-3-glycerol phosphate synthase (264 aa).

The protein belongs to the TrpC family.

The catalysed reaction is 1-(2-carboxyphenylamino)-1-deoxy-D-ribulose 5-phosphate + H(+) = (1S,2R)-1-C-(indol-3-yl)glycerol 3-phosphate + CO2 + H2O. Its pathway is amino-acid biosynthesis; L-tryptophan biosynthesis; L-tryptophan from chorismate: step 4/5. This is Indole-3-glycerol phosphate synthase from Azoarcus sp. (strain BH72).